A 351-amino-acid chain; its full sequence is O-methyltransferase apf6 (351 aa).

S-adenosyl-L-methionine-binding positions include 231–232 (GG), 279–280 (NF), and Arg295. His299 serves as the catalytic Proton acceptor.

It belongs to the class I-like SAM-binding methyltransferase superfamily. Cation-independent O-methyltransferase family.

It functions in the pathway secondary metabolite biosynthesis. O-methyltransferase; part of the gene cluster that mediates the biosynthesis of the cyclic tetrapeptide apicidin F (APF). The non-ribosomal peptide synthetase apf1 incorporates four different amino acids to produce apicidin F: L-phenylalanine, D-pipecolic acid (D-pip), N-methoxy-L-tryptophan and L-2-aminooctanedioic acid. L-Phenylalanine is the only proteinogenic amino acid directly used by apf1. The 3 other apf1 substrates are non-proteinogenic and have to be modified by other enzymes of the cluster. Lysine is converted to delta-1-pyrroline-5-carboxylate (P5C) which is reduced to L-pipecolic acid (L-pip) by apf3. L-pip is epimerized to D-pip, probably by apf1 activity, prior to incorporation. L-Tryptophan is N-oxidyzed by one of the cytochrome P450 monooxygenases (apf7 or apf8), and further methylated at the hydroxy group by the O-methyltransferase apf6 to yield N-methoxy-L-tryptophan. The synthesis of the fourth apf1 substrate is more complex. The fatty acid synthase apf5 is involved in the synthesis of the octanoic acid backbone of L-2-aminooctanedioic acid by fixing one acetyl-CoA unit and three malonyl-CoA units. Then one of the cytochrome P450 monooxygenases (apf7 or apf8) may oxidize this backbone to 2-oxooctanoic acid. The aminotransferase apf4 is predicted to catalyze the exchange of the keto group with an amino group. The next step would be the oxidation of 2-aminooctanoic acid by one of the cytochrome P450 monooxygenases (apf7 or apf8). The last step is the oxidation of 2-amino-8-hydroxyoctanoic acid to 2-aminooctanedioic acid is catalyzed by the FAD-dependent monooxygenase apf9. This is O-methyltransferase apf6 from Gibberella fujikuroi (strain CBS 195.34 / IMI 58289 / NRRL A-6831) (Bakanae and foot rot disease fungus).